A 263-amino-acid polypeptide reads, in one-letter code: MSIHPTAIIAPEAKLAPDVEVGPFSIVGPDVTLAAGVRLLSHVVVEGATTIGEGCVVHSFANLGGPPQHLGHKGERTELIIGPRNIIREHVTMHTGTASGKGVTTIGSDGLYMVGSHVAHDCTVGDFVVLAKGATLGGHVAIGDYVFMGGLAAAHQFSRIGRYSFIGGLAAVTKDVIPYGSVWGNHAHLEGLNLVGLKRRGFPRETINALRAAYRLMFADEGTFQERLDDVAEIHAGNAEVMEIVDFIRTDANRPLCLPEREV.

This sequence belongs to the transferase hexapeptide repeat family. LpxA subfamily. In terms of assembly, homotrimer.

Its subcellular location is the cytoplasm. It catalyses the reaction a (3R)-hydroxyacyl-[ACP] + UDP-N-acetyl-alpha-D-glucosamine = a UDP-3-O-[(3R)-3-hydroxyacyl]-N-acetyl-alpha-D-glucosamine + holo-[ACP]. It participates in glycolipid biosynthesis; lipid IV(A) biosynthesis; lipid IV(A) from (3R)-3-hydroxytetradecanoyl-[acyl-carrier-protein] and UDP-N-acetyl-alpha-D-glucosamine: step 1/6. Functionally, involved in the biosynthesis of lipid A, a phosphorylated glycolipid that anchors the lipopolysaccharide to the outer membrane of the cell. The protein is Acyl-[acyl-carrier-protein]--UDP-N-acetylglucosamine O-acyltransferase of Caulobacter vibrioides (strain ATCC 19089 / CIP 103742 / CB 15) (Caulobacter crescentus).